The sequence spans 152 residues: Large ribosomal subunit protein bL21 (152 aa).

Positions Val115 to Glu152 are disordered. Residues Ala127–Lys143 are compositionally biased toward polar residues.

Belongs to the bacterial ribosomal protein bL21 family. Part of the 50S ribosomal subunit. Contacts protein L20.

This protein binds to 23S rRNA in the presence of protein L20. The protein is Large ribosomal subunit protein bL21 of Prochlorococcus marinus (strain SARG / CCMP1375 / SS120).